The primary structure comprises 1026 residues: MVCRPVFPCRRRFCPRPFLVGLVVAICLFYQTLTLRGSRKLTAAAPGAVPHTSTETQASRCKKGFSQDKQCFLLSGNAQETRKVKESMETHFGSHGRRAILYRPPFYSKTELQLHQHILTQHGYTVVIAEERLNAGLGPGLLEQGDLGSWDLLICLSSKKAEGTPCISKEVMCQLGLHQKANRLPEIQQPLCRKEGLCQIVRRFPELQLPVSPSVCLDQGMQLKPSTSSHLLKTVKPRVWKPGDWSREQLNETTVLAPHETIFRAEDLSVILKAYVLVTSLTPLRAFIHSTGTVWNPPKKKRFTVKLQTFFETFLRASSPQQAFDIMKEAIGKLLLAAEVFSETSTLGPKTFHRCRFCFQLLTFDIGYGSFMYPVVLQVHEHLNFQDYDNMDFEDQNTEEFLLNDTFNFLFPNESSLSIFSEIFQRLYRSDVFKGENYQKELNQCLSLEEINSIMTFIKELGSLGQFQLLFPSTTPGIQSLMHEFYDVANPVGNPGSVLTQYWSLLNVFEQFQFMNKKTQPHPLEWNSFTEDKNIEKPQVPFDAIENKKAAVPQIKNENKEIHCSDDENTPCHIKQIFTHPHLELNPDFHPKIKDYYCEVPFDVVTVTIGVETPKCLCKVHLYEQAGPSFASYPLGLGMNKISIFVVDESPAHGETLITYKLTIYREDRPSLPLFEAFTACGFVQDCGLLIHPEETCGLQPISSDYIEAILQSELKRCPSGDMKGQWIVPCLSCSDNRTCDWREITWQPHNCQYGVLTKPQLQQCLGGRKILFIGDSTNRGIMYYLIERLNETLQEWQKVHGTKFYHNVNGGKTLISYSYYPQFWISPSLRPTFENALEHLLQRSRPLENTGQTVLVVGGVQWLNSNHLQIIHKVLKRENLLNILVIIKTLGIGFHLPVDGVHFLTQSEVQNLWKENLIILDTAKKHGYEVVDTFTITMGRYKEFLQGKCGCHFHEVVKSKLSKEYNFIKMKRSRNHIMGRYFSNQSKLQQGTVTNFRSPYHVRGPINQVCSEILLSRMCANKRTM.

The signal sequence occupies residues 1–34 (MVCRPVFPCRRRFCPRPFLVGLVVAICLFYQTLT). 6 N-linked (GlcNAc...) asparagine glycosylation sites follow: Asn-251, Asn-404, Asn-413, Asn-737, Asn-791, and Asn-985.

Belongs to the PC-esterase family.

This Homo sapiens (Human) protein is Cadherin-like and PC-esterase domain-containing protein 1 (CPED1).